A 1403-amino-acid polypeptide reads, in one-letter code: Baculoviral IAP repeat-containing protein 1e (1403 aa).

3 BIR repeats span residues 60 to 127 (EAKR…CEFL), 159 to 227 (EEAR…CEFL), and 278 to 345 (EELR…CVFL). Residues Cys315, Cys318, His335, and Cys342 each coordinate Zn(2+). In terms of domain architecture, NACHT spans 464-759 (SVMCVEGETG…EFLAAVRLTE (296 aa)). 473–478 (GSGKTT) contacts ATP.

As to quaternary structure, component of the NLRC4 inflammasome, at least composed of NLRC4, caspase-1 (CASP1) and some NAIP protein. Flagellin binding by NAIP5 triggers assembly of the inflammasome, a huge complex that contains a single NAIP5 chain and multiple copies of NLRC4. In terms of assembly, (Microbial infection) Interacts with S.typhimurium (Salmonella) flagellin. (Microbial infection) Interacts with L.pneumophila flagellin. In terms of tissue distribution, detected in macrophages (at protein level).

Its function is as follows. Sensor component of the NLRC4 inflammasome that specifically recognizes and binds flagellin from pathogenic bacteria such as Legionella or Salmonella. Association of pathogenic bacteria proteins drives in turn drive assembly and activation of the NLRC4 inflammasome, promoting caspase-1 activation, cytokine production and macrophage pyroptosis. The NLRC4 inflammasome is activated as part of the innate immune response to a range of intracellular bacteria. The NLRC4 inflammasome senses Gram-negative bacteria such as L.pneumophila and P.aeruginosa, enteric pathogens S.typhimurium (Salmonella) and S.flexneri. May contribute to prevent motor-neuron apoptosis induced by a variety of signals. The protein is Baculoviral IAP repeat-containing protein 1e of Mus musculus (Mouse).